A 210-amino-acid polypeptide reads, in one-letter code: NAD(P)H-hydrate epimerase (210 aa).

Residues 11-210 (AHNFDDYTIN…TVADIGIYEP (200 aa)) form the YjeF N-terminal domain. (6S)-NADPHX is bound at residue 60 to 64 (NNGGD). 2 residues coordinate K(+): Asn61 and Asp123. (6S)-NADPHX-binding positions include 127–133 (GVGLSRD) and Asp156. Thr159 is a binding site for K(+).

The protein belongs to the NnrE/AIBP family. K(+) is required as a cofactor.

It catalyses the reaction (6R)-NADHX = (6S)-NADHX. It carries out the reaction (6R)-NADPHX = (6S)-NADPHX. Its function is as follows. Catalyzes the epimerization of the S- and R-forms of NAD(P)HX, a damaged form of NAD(P)H that is a result of enzymatic or heat-dependent hydration. This is a prerequisite for the S-specific NAD(P)H-hydrate dehydratase to allow the repair of both epimers of NAD(P)HX. This Oenococcus oeni (strain ATCC BAA-331 / PSU-1) protein is NAD(P)H-hydrate epimerase.